A 107-amino-acid chain; its full sequence is Thioredoxin (107 aa).

Residues 2–107 (SEVLHINDAD…QLANFINQHI (106 aa)) enclose the Thioredoxin domain. The cysteines at positions 32 and 35 are disulfide-linked.

It belongs to the thioredoxin family.

Participates in various redox reactions through the reversible oxidation of its active center dithiol to a disulfide and catalyzes dithiol-disulfide exchange reactions. The polypeptide is Thioredoxin (trxA) (Haemophilus influenzae (strain ATCC 51907 / DSM 11121 / KW20 / Rd)).